The chain runs to 235 residues: Ubiquitin-like-conjugating enzyme ATG10 (235 aa).

Residue C196 is the Glycyl thioester intermediate of the active site.

Belongs to the ATG10 family. In terms of assembly, forms homooligomers. Interacts with ATG7 and ATG12.

It localises to the preautophagosomal structure membrane. Its function is as follows. E2-like enzyme required for the cytoplasm to vacuole transport (Cvt), autophagy and nucleophagy. Acts as an E2-like enzyme that catalyzes the conjugation of ATG12 to ATG5. ATG12 conjugation to ATG5 is required for proper localization of ATG8 to the preautophagosomal structure (PAS). Likely serves as an ATG5-recognition molecule. Autophagy is required for proper vegetative growth, asexual/sexual reproduction, and full virulence. Autophagy is particularly involved in the biosynthesis of deoxynivalenol (DON), an important virulence determinant. The sequence is that of Ubiquitin-like-conjugating enzyme ATG10 from Gibberella zeae (strain ATCC MYA-4620 / CBS 123657 / FGSC 9075 / NRRL 31084 / PH-1) (Wheat head blight fungus).